The sequence spans 303 residues: D-alanine--D-alanine ligase (303 aa).

An ATP-grasp domain is found at 99-293 (TYRFLKGTVE…FEELVEIILK (195 aa)). 125-176 (GYPCVVKPRREGSSIGVFVCESDEEFQHALKEDLPRYGSVIVQKYIPGREMT) is an ATP binding site. 3 residues coordinate Mg(2+): aspartate 248, glutamate 260, and asparagine 262.

It belongs to the D-alanine--D-alanine ligase family. The cofactor is Mg(2+). Requires Mn(2+) as cofactor.

It localises to the cytoplasm. It catalyses the reaction 2 D-alanine + ATP = D-alanyl-D-alanine + ADP + phosphate + H(+). It functions in the pathway cell wall biogenesis; peptidoglycan biosynthesis. Its function is as follows. Cell wall formation. The sequence is that of D-alanine--D-alanine ligase from Thermotoga maritima (strain ATCC 43589 / DSM 3109 / JCM 10099 / NBRC 100826 / MSB8).